The chain runs to 489 residues: Betaine aldehyde dehydrogenase (489 aa).

Residues Thr26 and Asp93 each contribute to the K(+) site. 150–152 (GAW) contacts NAD(+). The active-site Charge relay system is Lys162. 176 to 179 (KPSE) is an NAD(+) binding site. Position 180 (Val180) interacts with K(+). 229-232 (GVET) contributes to the NAD(+) binding site. A K(+)-binding site is contributed by Leu245. Glu251 serves as the catalytic Proton acceptor. Residues Gly253, Cys285, and Glu386 each coordinate NAD(+). Cys285 serves as the catalytic Nucleophile. A Cysteine sulfenic acid (-SOH) modification is found at Cys285. The K(+) site is built by Lys456 and Gly459. Glu463 (charge relay system) is an active-site residue.

It belongs to the aldehyde dehydrogenase family. Dimer of dimers. K(+) is required as a cofactor.

The enzyme catalyses betaine aldehyde + NAD(+) + H2O = glycine betaine + NADH + 2 H(+). It participates in amine and polyamine biosynthesis; betaine biosynthesis via choline pathway; betaine from betaine aldehyde: step 1/1. In terms of biological role, involved in the biosynthesis of the osmoprotectant glycine betaine. Catalyzes the irreversible oxidation of betaine aldehyde to the corresponding acid. The sequence is that of Betaine aldehyde dehydrogenase from Burkholderia orbicola (strain AU 1054).